The following is a 116-amino-acid chain: PTS system N,N'-diacetylchitobiose-specific EIIA component (116 aa).

The PTS EIIA type-3 domain maps to 15–113 (EELEEVVMGL…ITELIELHEK (99 aa)). His89 acts as the Tele-phosphohistidine intermediate in catalysis. The residue at position 89 (His89) is a Phosphohistidine; by HPr.

As to quaternary structure, forms a complex with ChbB (EIIB). ChbA is a homotrimer. Mg(2+) serves as cofactor.

The protein localises to the cytoplasm. The phosphoenolpyruvate-dependent sugar phosphotransferase system (sugar PTS), a major carbohydrate active transport system, catalyzes the phosphorylation of incoming sugar substrates concomitantly with their translocation across the cell membrane. The enzyme II ChbABC PTS system is involved in the transport of the chitin disaccharide N,N'-diacetylchitobiose (GlcNAc2). This is PTS system N,N'-diacetylchitobiose-specific EIIA component (chbA) from Escherichia coli O157:H7.